A 236-amino-acid chain; its full sequence is MTLYPAIDLKDGKAVRLTKGLMDSAKIYSDEPWMLVKKFEEMGAKWVHLVDLNGAFAGEPKNLEQIIKIRQNCKVKLELGGGIRDEDTIKKMLEIGIDRVILGSIAVKNPTFVKEMAAKYPIAVGIDAIDGFVAVEGWGEVSAMRATDLAKEFANAGVEAIICTDVSRDGTLSGVNVEFTLDIANACKIPTIASGGVKDESDIEALVSAKGIDGVIIGKAYYEGTLDLPKMFKKYS.

Aspartate 8 serves as the catalytic Proton acceptor. Aspartate 127 functions as the Proton donor in the catalytic mechanism.

This sequence belongs to the HisA/HisF family.

The protein localises to the cytoplasm. It catalyses the reaction 1-(5-phospho-beta-D-ribosyl)-5-[(5-phospho-beta-D-ribosylamino)methylideneamino]imidazole-4-carboxamide = 5-[(5-phospho-1-deoxy-D-ribulos-1-ylimino)methylamino]-1-(5-phospho-beta-D-ribosyl)imidazole-4-carboxamide. It participates in amino-acid biosynthesis; L-histidine biosynthesis; L-histidine from 5-phospho-alpha-D-ribose 1-diphosphate: step 4/9. This is 1-(5-phosphoribosyl)-5-[(5-phosphoribosylamino)methylideneamino] imidazole-4-carboxamide isomerase from Sulfurimonas denitrificans (strain ATCC 33889 / DSM 1251) (Thiomicrospira denitrificans (strain ATCC 33889 / DSM 1251)).